Here is a 260-residue protein sequence, read N- to C-terminus: Homeobox protein CDX-1 (260 aa).

A DNA-binding region (homeobox) is located at residues 149–208 (KDKYRVVYTDHQRLELEKEFHYSRYITIRRKAELAAALGLTERQVKIWFQNRRAKERKVN). An interaction with DNA region spans residues 152–173 (YRVVYTDHQRLELEKEFHYSRY). Positions 191–202 (RQVKIWFQNRRA) are interaction with 5-mCpG DNA. Positions 204 to 260 (ERKVNKKKLQQQSQPTSTTTPTPPAVGTPGPMGTLCSGSAPSLVSSSPLTIKEEFMP) are disordered. Low complexity-rich tracts occupy residues 213–223 (QQQSQPTSTTT) and 240–252 (SGSA…SSPL).

It belongs to the Caudal homeobox family.

It localises to the nucleus. Functionally, plays a role in transcriptional regulation. Involved in activated KRAS-mediated transcriptional activation of PRKD1. Binds to the PRKD1 promoter. Could play a role in the terminal differentiation of the intestine. Binds preferentially to methylated DNA. This is Homeobox protein CDX-1 (CDX1) from Gallus gallus (Chicken).